The chain runs to 618 residues: Dihydroxy-acid dehydratase (618 aa).

Mg(2+) is bound at residue aspartate 81. Cysteine 122 provides a ligand contact to [2Fe-2S] cluster. Residues aspartate 123 and lysine 124 each coordinate Mg(2+). An N6-carboxylysine modification is found at lysine 124. Cysteine 195 serves as a coordination point for [2Fe-2S] cluster. Glutamate 492 contacts Mg(2+). Serine 518 acts as the Proton acceptor in catalysis.

It belongs to the IlvD/Edd family. As to quaternary structure, homodimer. [2Fe-2S] cluster serves as cofactor. Requires Mg(2+) as cofactor.

It carries out the reaction (2R)-2,3-dihydroxy-3-methylbutanoate = 3-methyl-2-oxobutanoate + H2O. The catalysed reaction is (2R,3R)-2,3-dihydroxy-3-methylpentanoate = (S)-3-methyl-2-oxopentanoate + H2O. Its pathway is amino-acid biosynthesis; L-isoleucine biosynthesis; L-isoleucine from 2-oxobutanoate: step 3/4. It functions in the pathway amino-acid biosynthesis; L-valine biosynthesis; L-valine from pyruvate: step 3/4. In terms of biological role, functions in the biosynthesis of branched-chain amino acids. Catalyzes the dehydration of (2R,3R)-2,3-dihydroxy-3-methylpentanoate (2,3-dihydroxy-3-methylvalerate) into 2-oxo-3-methylpentanoate (2-oxo-3-methylvalerate) and of (2R)-2,3-dihydroxy-3-methylbutanoate (2,3-dihydroxyisovalerate) into 2-oxo-3-methylbutanoate (2-oxoisovalerate), the penultimate precursor to L-isoleucine and L-valine, respectively. The polypeptide is Dihydroxy-acid dehydratase (Zymomonas mobilis subsp. mobilis (strain ATCC 31821 / ZM4 / CP4)).